The following is a 118-amino-acid chain: Large ribosomal subunit protein bL17 (118 aa).

This sequence belongs to the bacterial ribosomal protein bL17 family. In terms of assembly, part of the 50S ribosomal subunit. Contacts protein L32.

The chain is Large ribosomal subunit protein bL17 from Campylobacter fetus subsp. fetus (strain 82-40).